Consider the following 410-residue polypeptide: Killer cell immunoglobulin-like receptor 3DL3 (410 aa).

An N-terminal signal peptide occupies residues 1-25; that stretch reads MSLMVVSMACVGFFLLEGPWPHVGG. The Extracellular segment spans residues 26 to 322; sequence QDKPFLSAWP…VSVTGNSRHL (297 aa). Ig-like C2-type domains lie at 42–97, 137–197, and 237–295; these read GQHV…RCCS, GETV…RCFG, and GENV…RCFG. 2 cysteine pairs are disulfide-bonded: Cys49/Cys95 and Cys144/Cys195. N-linked (GlcNAc...) asparagine glycosylation is found at Asn179, Asn239, and Asn273. Residues Cys244 and Cys293 are joined by a disulfide bond. A helical transmembrane segment spans residues 323-343; it reads HVLIGTSVVIIPFAILLFFLL. Residues 344–410 are Cytoplasmic-facing; the sequence is HRWCANKKNA…PKTPPTDTSV (67 aa).

It belongs to the immunoglobulin superfamily.

The protein localises to the cell membrane. Its function is as follows. Receptor on natural killer cells. May inhibit the activity of NK cells thus preventing cell lysis. The sequence is that of Killer cell immunoglobulin-like receptor 3DL3 (KIR3DL3) from Homo sapiens (Human).